The sequence spans 154 residues: MKNVIIDLQIASEDVTNLPSVEQIQLWANAAIRAENSQPEMTVRIVDEEESHHLNLTYRGKDKPTNVLSFPFECPDEIELPLIGDLVICRQVVEREATEQEKPLMAHWAHMIVHGSLHLLGYDHIEDDEAEEMERLETEIMLSLGFTDPYIIEK.

Zn(2+) is bound by residues H114, H118, and H124.

This sequence belongs to the endoribonuclease YbeY family. The cofactor is Zn(2+).

The protein resides in the cytoplasm. Single strand-specific metallo-endoribonuclease involved in late-stage 70S ribosome quality control and in maturation of the 3' terminus of the 16S rRNA. In Histophilus somni (strain 129Pt) (Haemophilus somnus), this protein is Endoribonuclease YbeY.